The chain runs to 151 residues: Transcriptional repressor NrdR (151 aa).

The segment at 3 to 34 (CPKCGSLNDKVLETRQSKEGVVIKRRRECLNC) is a zinc-finger region. The region spanning 49–139 (IEVIKKNNTV…VFDGFEDIKD (91 aa)) is the ATP-cone domain.

This sequence belongs to the NrdR family. The cofactor is Zn(2+).

Negatively regulates transcription of bacterial ribonucleotide reductase nrd genes and operons by binding to NrdR-boxes. In Sulfurihydrogenibium sp. (strain YO3AOP1), this protein is Transcriptional repressor NrdR.